Consider the following 599-residue polypeptide: Sulfite reductase [NADPH] flavoprotein alpha-component (599 aa).

One can recognise a Flavodoxin-like domain in the interval 64-202 (ITIISASQTG…AASEWRARVV (139 aa)). Residues 70-75 (SQTGNA), 117-120 (STQG), and 153-162 (LGDSSYEFFC) contribute to the FMN site. Residues 234 to 448 (DAPLVASLSV…IEHNDNFRLP (215 aa)) enclose the FAD-binding FR-type domain. FAD is bound by residues Thr-322, Ala-356, 386–389 (RLYS), 404–406 (TVG), Tyr-410, and 419–422 (GGAS). NADP(+) contacts are provided by residues 519 to 520 (SR), 525 to 529 (KVYVQ), and Asp-561. Residue Tyr-599 participates in FAD binding.

It belongs to the NADPH-dependent sulphite reductase flavoprotein subunit CysJ family. In the N-terminal section; belongs to the flavodoxin family. This sequence in the C-terminal section; belongs to the flavoprotein pyridine nucleotide cytochrome reductase family. Alpha(8)-beta(8). The alpha component is a flavoprotein, the beta component is a hemoprotein. It depends on FAD as a cofactor. Requires FMN as cofactor.

It catalyses the reaction hydrogen sulfide + 3 NADP(+) + 3 H2O = sulfite + 3 NADPH + 4 H(+). It functions in the pathway sulfur metabolism; hydrogen sulfide biosynthesis; hydrogen sulfide from sulfite (NADPH route): step 1/1. Functionally, component of the sulfite reductase complex that catalyzes the 6-electron reduction of sulfite to sulfide. This is one of several activities required for the biosynthesis of L-cysteine from sulfate. The flavoprotein component catalyzes the electron flow from NADPH -&gt; FAD -&gt; FMN to the hemoprotein component. The chain is Sulfite reductase [NADPH] flavoprotein alpha-component from Escherichia coli (strain K12).